We begin with the raw amino-acid sequence, 492 residues long: N-succinylglutamate 5-semialdehyde dehydrogenase (492 aa).

NAD(+) is bound at residue 220–225; that stretch reads GSANTG. Active-site residues include Glu-243 and Cys-277.

Belongs to the aldehyde dehydrogenase family. AstD subfamily.

The catalysed reaction is N-succinyl-L-glutamate 5-semialdehyde + NAD(+) + H2O = N-succinyl-L-glutamate + NADH + 2 H(+). The protein operates within amino-acid degradation; L-arginine degradation via AST pathway; L-glutamate and succinate from L-arginine: step 4/5. In terms of biological role, catalyzes the NAD-dependent reduction of succinylglutamate semialdehyde into succinylglutamate. The sequence is that of N-succinylglutamate 5-semialdehyde dehydrogenase from Escherichia coli O157:H7.